Here is a 469-residue protein sequence, read N- to C-terminus: Glutamine synthetase (469 aa).

Positions 13–97 (HEVKFVDLRF…IRCDILEPGT (85 aa)) constitute a GS beta-grasp domain. Positions 105-469 (PRSIAKRAED…PVEFELYYSV (365 aa)) constitute a GS catalytic domain. Positions 130 and 132 each coordinate Mg(2+). Glu208 is an ATP binding site. Residues Glu213 and Glu221 each coordinate Mg(2+). Residues 265 to 266 (NG) and Gly266 each bind L-glutamate. His270 contributes to the Mg(2+) binding site. ATP contacts are provided by residues 272–274 (HMS) and Ser274. L-glutamate is bound by residues Arg322, Glu328, and Arg340. Arg340, Arg345, and Lys353 together coordinate ATP. Position 358 (Glu358) interacts with Mg(2+). Arg360 lines the L-glutamate pocket. Tyr398 carries the post-translational modification O-AMP-tyrosine.

The protein belongs to the glutamine synthetase family. As to quaternary structure, oligomer of 12 subunits arranged in the form of two hexameric ring. The cofactor is Mg(2+).

Its subcellular location is the cytoplasm. The catalysed reaction is L-glutamate + NH4(+) + ATP = L-glutamine + ADP + phosphate + H(+). Its activity is regulated as follows. The activity of this enzyme could be controlled by adenylation under conditions of abundant glutamine. Its function is as follows. Catalyzes the ATP-dependent biosynthesis of glutamine from glutamate and ammonia. The polypeptide is Glutamine synthetase (Escherichia coli O157:H7).